We begin with the raw amino-acid sequence, 466 residues long: A-type ATP synthase subunit B 2 (466 aa).

It belongs to the ATPase alpha/beta chains family. As to quaternary structure, has multiple subunits with at least A(3), B(3), C, D, E, F, H, I and proteolipid K(x).

The protein localises to the cell membrane. Its function is as follows. Component of the A-type ATP synthase that produces ATP from ADP in the presence of a proton gradient across the membrane. The B chain is a regulatory subunit. This Methanospirillum hungatei JF-1 (strain ATCC 27890 / DSM 864 / NBRC 100397 / JF-1) protein is A-type ATP synthase subunit B 2.